The chain runs to 325 residues: MNALIAVQNNAVDSGQDYSGFTLIPSAQSPRLLELTFTEQTTKQFLEQVAEWPVQALEYKSFLRFRVGKILDDLCANQLQPLLLKPLLNRAEGALLINAVGIDDVAQADEMVKLATAVAHLIGRSNFDAMSGQYYARFVVKNVDNSDSYLRQPHRVMELHNDGTYVEEITDYVLMMKIDEQNMQGGNSLLLHLDDWEHLDHYFRHPLARRPMRFAAPPSKNVSKDVFHPVFDVDQQGRPVMRYIDQFVQPKDFEEGVWLSELSDAIETSKGILSVPVPVGKFLLINNLFWLHGRDRFTPHPDLRRELMRQRGYFAYATHHYQTHQ.

Histidine 160, aspartate 162, and histidine 292 together coordinate Fe cation.

Belongs to the glutarate hydroxylase family. Homotetramer. Requires Fe(2+) as cofactor.

The enzyme catalyses glutarate + 2-oxoglutarate + O2 = (S)-2-hydroxyglutarate + succinate + CO2. Its pathway is amino-acid degradation. Functionally, acts as an alpha-ketoglutarate-dependent dioxygenase catalyzing hydroxylation of glutarate (GA) to L-2-hydroxyglutarate (L2HG). Functions in a L-lysine degradation pathway that proceeds via cadaverine, glutarate and L-2-hydroxyglutarate. The chain is Glutarate 2-hydroxylase from Shigella boydii serotype 18 (strain CDC 3083-94 / BS512).